Consider the following 206-residue polypeptide: Inner membrane-spanning protein YciB (206 aa).

5 helical membrane-spanning segments follow: residues 22-42 (IYTA…LTYF), 50-70 (MQVI…FLHD), 76-96 (WKVT…HIMG), 118-138 (INWA…YVAF), and 148-168 (FKVF…GVYI). Residues 178–189 (LPKDKHQQRDQE) show a composition bias toward basic and acidic residues. The segment at 178 to 206 (LPKDKHQQRDQETQNDTQQELSGKNTEEK) is disordered. The span at 191–206 (QNDTQQELSGKNTEEK) shows a compositional bias: polar residues.

Belongs to the YciB family.

The protein resides in the cell inner membrane. Its function is as follows. Plays a role in cell envelope biogenesis, maintenance of cell envelope integrity and membrane homeostasis. The chain is Inner membrane-spanning protein YciB from Vibrio atlanticus (strain LGP32) (Vibrio splendidus (strain Mel32)).